Consider the following 292-residue polypeptide: Phosphatidylserine decarboxylase proenzyme (292 aa).

Active-site charge relay system; for autoendoproteolytic cleavage activity residues include Asp-89, His-146, and Ser-252. Residue Ser-252 is the Schiff-base intermediate with substrate; via pyruvic acid; for decarboxylase activity of the active site. Ser-252 is subject to Pyruvic acid (Ser); by autocatalysis.

It belongs to the phosphatidylserine decarboxylase family. PSD-B subfamily. Prokaryotic type I sub-subfamily. Heterodimer of a large membrane-associated beta subunit and a small pyruvoyl-containing alpha subunit. The cofactor is pyruvate. Post-translationally, is synthesized initially as an inactive proenzyme. Formation of the active enzyme involves a self-maturation process in which the active site pyruvoyl group is generated from an internal serine residue via an autocatalytic post-translational modification. Two non-identical subunits are generated from the proenzyme in this reaction, and the pyruvate is formed at the N-terminus of the alpha chain, which is derived from the carboxyl end of the proenzyme. The autoendoproteolytic cleavage occurs by a canonical serine protease mechanism, in which the side chain hydroxyl group of the serine supplies its oxygen atom to form the C-terminus of the beta chain, while the remainder of the serine residue undergoes an oxidative deamination to produce ammonia and the pyruvoyl prosthetic group on the alpha chain. During this reaction, the Ser that is part of the protease active site of the proenzyme becomes the pyruvoyl prosthetic group, which constitutes an essential element of the active site of the mature decarboxylase.

Its subcellular location is the cell membrane. It catalyses the reaction a 1,2-diacyl-sn-glycero-3-phospho-L-serine + H(+) = a 1,2-diacyl-sn-glycero-3-phosphoethanolamine + CO2. It participates in phospholipid metabolism; phosphatidylethanolamine biosynthesis; phosphatidylethanolamine from CDP-diacylglycerol: step 2/2. Catalyzes the formation of phosphatidylethanolamine (PtdEtn) from phosphatidylserine (PtdSer). The sequence is that of Phosphatidylserine decarboxylase proenzyme from Shewanella baltica (strain OS223).